The following is a 487-amino-acid chain: L-tartrate/succinate antiporter (487 aa).

14 consecutive transmembrane segments (helical) span residues 10 to 30, 33 to 53, 54 to 74, 93 to 113, 137 to 157, 189 to 209, 236 to 256, 292 to 312, 313 to 333, 340 to 360, 370 to 390, 393 to 413, 418 to 438, and 465 to 485; these read YLAPLAVIAIIALIPVPAGLE, TWLYFAVFTGVIVGLILEPVP, GAVVAMVGISIIAILSPWLLF, WAVFGFSNSVIWLIFAAFMFG, TLFLGYAVMFSELILAPVTPS, IGSYIMWMGIVADCVTSAIFL, FLGMLPLSILLVLLVPWLAYV, LMVGALVLWIFGGDYIDAAMV, GYSVVALMLLLRIISWDDIVS, VFFWLASLITLATGLNNTGFI, SLSGYSPTMVMVALIVVFYLL, FFASATAYTSALAPMMIAAAL, IPLPVFCLMVGAAIGLGSILT, and IFGLIFLVLLVITGLLWMPVV.

This sequence belongs to the SLC13A/DASS transporter (TC 2.A.47) family. DIT1 subfamily.

The protein localises to the cell inner membrane. It catalyses the reaction (2R,3R)-tartrate(out) + succinate(in) = (2R,3R)-tartrate(in) + succinate(out). In terms of biological role, catalyzes the uptake of tartrate in exchange for intracellular succinate. Essential for anaerobic L-tartrate fermentation. This is L-tartrate/succinate antiporter (ttdT) from Shigella boydii serotype 4 (strain Sb227).